Consider the following 287-residue polypeptide: PPP2R1A-PPP2R2A-interacting phosphatase regulator 1 (287 aa).

Positions 1–44 are disordered; that stretch reads MAQEKMELDLELPPGTGGSPAEGGGSGGGGGLRRSNSAPLIHGL. Residues 15 to 32 show a composition bias toward gly residues; that stretch reads GTGGSPAEGGGSGGGGGL. At serine 35 the chain carries Phosphoserine. The residue at position 37 (serine 37) is a Phosphoserine; by CHEK1. The residue at position 45 (serine 45) is a Phosphoserine. Phosphothreonine is present on threonine 47. Phosphoserine occurs at positions 48, 62, and 76. Residue lysine 89 forms a Glycyl lysine isopeptide (Lys-Gly) (interchain with G-Cter in SUMO1) linkage. Phosphoserine occurs at positions 143 and 147. Threonine 149 is subject to Phosphothreonine. Disordered regions lie at residues 167 to 189 and 236 to 287; these read SNGLPPSPIPSPTTRFTTRRSQS and GVCV…LSSK. Low complexity-rich tracts occupy residues 178 to 189 and 246 to 257; these read PTTRFTTRRSQS and GNSSSAGSSCNS. A phosphoserine mark is found at serine 187 and serine 189. A compositionally biased stretch (polar residues) spans 259–270; that stretch reads AKVSTTTDSPVS. Phosphoserine occurs at positions 267, 270, and 276.

This sequence belongs to the FAM122 family. As to quaternary structure, interacts with PPP2CA and PPP2R1A. Interacts (via its N-terminus) with PPP2R2A; the interaction is direct and this interaction inhibits PP2A activity. The CHEK1-mediated Ser-37 phosphorylated form interacts with 14-3-3 proteins. CHEK1-mediated phosphorylation at Ser-37 negatively regulates its ability to inhibit serine/threonine-protein phosphatase 2A (PP2A) activity. Phosphorylation leads to its release from the PP2A complex and its sequestration by 14-3-3 proteins in the cytoplasm resulting in its inability to translocate to the nucleus, where it otherwise inhibits PP2A.

The protein resides in the nucleus. It localises to the cytoplasm. In terms of biological role, acts as an inhibitor of serine/threonine-protein phosphatase 2A (PP2A) activity. Inhibits PP2A activity by blocking the substrate binding site on PPP2R2A and the active site of PPP2CA. Potentiates ubiquitin-mediated proteasomal degradation of serine/threonine-protein phosphatase 2A catalytic subunit alpha (PPP2CA). Inhibits PP2A-mediated dephosphorylation of WEE1, promoting ubiquitin-mediated proteolysis of WEE1, thereby releasing G2/M checkpoint. The protein is PPP2R1A-PPP2R2A-interacting phosphatase regulator 1 of Homo sapiens (Human).